Here is a 91-residue protein sequence, read N- to C-terminus: Small ribosomal subunit protein uS19 (91 aa).

The protein belongs to the universal ribosomal protein uS19 family.

Functionally, protein S19 forms a complex with S13 that binds strongly to the 16S ribosomal RNA. This Aliarcobacter butzleri (strain RM4018) (Arcobacter butzleri) protein is Small ribosomal subunit protein uS19.